The chain runs to 230 residues: Ureidoacrylate amidohydrolase RutB (230 aa).

Residue aspartate 24 is the Proton acceptor of the active site. Lysine 133 is a catalytic residue. Cysteine 166 functions as the Nucleophile in the catalytic mechanism.

The protein belongs to the isochorismatase family. RutB subfamily.

It catalyses the reaction (Z)-3-ureidoacrylate + H2O + H(+) = (Z)-3-aminoacrylate + NH4(+) + CO2. The catalysed reaction is (Z)-3-ureidoacrylate + H2O = (Z)-3-aminoacrylate + carbamate + H(+). The enzyme catalyses (Z)-2-methylureidoacrylate + H2O + H(+) = (Z)-2-methylaminoacrylate + NH4(+) + CO2. In terms of biological role, hydrolyzes ureidoacrylate to form aminoacrylate and carbamate. The carbamate hydrolyzes spontaneously, thereby releasing one of the nitrogen atoms of the pyrimidine ring as ammonia and one of its carbon atoms as CO2. This Escherichia coli O111:H- (strain 11128 / EHEC) protein is Ureidoacrylate amidohydrolase RutB.